The chain runs to 120 residues: NAD(P)H-quinone oxidoreductase subunit 3, chloroplastic (120 aa).

3 consecutive transmembrane segments (helical) span residues 9-29, 64-84, and 88-108; these read IFWA…FISG, MFAL…PWAM, and VLGV…ILGL.

This sequence belongs to the complex I subunit 3 family. NDH is composed of at least 16 different subunits, 5 of which are encoded in the nucleus.

Its subcellular location is the plastid. It is found in the chloroplast thylakoid membrane. The catalysed reaction is a plastoquinone + NADH + (n+1) H(+)(in) = a plastoquinol + NAD(+) + n H(+)(out). It carries out the reaction a plastoquinone + NADPH + (n+1) H(+)(in) = a plastoquinol + NADP(+) + n H(+)(out). Functionally, NDH shuttles electrons from NAD(P)H:plastoquinone, via FMN and iron-sulfur (Fe-S) centers, to quinones in the photosynthetic chain and possibly in a chloroplast respiratory chain. The immediate electron acceptor for the enzyme in this species is believed to be plastoquinone. Couples the redox reaction to proton translocation, and thus conserves the redox energy in a proton gradient. The protein is NAD(P)H-quinone oxidoreductase subunit 3, chloroplastic of Barbarea verna (Land cress).